A 634-amino-acid polypeptide reads, in one-letter code: Extracellular metalloproteinase mep (634 aa).

The N-terminal stretch at 1-18 (MRGLLLAGALALPASVFA) is a signal peptide. Positions 19-245 (HPAHQSYGLN…IHGVVDYVAE (227 aa)) are excised as a propeptide. N-linked (GlcNAc...) asparagine glycosylation is present at N286. H429 contacts Zn(2+). E430 is an active-site residue. Residue H433 participates in Zn(2+) binding.

Belongs to the peptidase M36 family. Zn(2+) serves as cofactor.

It is found in the secreted. In terms of biological role, secreted metalloproteinase that allows assimilation of proteinaceous substrates and probably acts as a virulence factor. This Aspergillus fumigatus (strain CBS 144.89 / FGSC A1163 / CEA10) (Neosartorya fumigata) protein is Extracellular metalloproteinase mep (mep).